The sequence spans 437 residues: ATP-dependent protease ATPase subunit HslU (437 aa).

ATP-binding positions include Val18, 60 to 65 (GCGKTE), Asp250, Glu315, and Arg387.

It belongs to the ClpX chaperone family. HslU subfamily. As to quaternary structure, a double ring-shaped homohexamer of HslV is capped on each side by a ring-shaped HslU homohexamer. The assembly of the HslU/HslV complex is dependent on binding of ATP.

It is found in the cytoplasm. Functionally, ATPase subunit of a proteasome-like degradation complex; this subunit has chaperone activity. The binding of ATP and its subsequent hydrolysis by HslU are essential for unfolding of protein substrates subsequently hydrolyzed by HslV. HslU recognizes the N-terminal part of its protein substrates and unfolds these before they are guided to HslV for hydrolysis. The chain is ATP-dependent protease ATPase subunit HslU from Methylorubrum extorquens (strain PA1) (Methylobacterium extorquens).